The following is a 304-amino-acid chain: Flagellin (304 aa).

Belongs to the bacterial flagellin family. In terms of assembly, interacts with FliW in a 1:1 complex. Forms a 3-way complex of Hag, FliS and FliW, in which Flis and FliW do not directly interact.

It is found in the secreted. The protein resides in the bacterial flagellum. Its subcellular location is the cell wall. Functionally, flagellin is the subunit which polymerizes to form the filaments of bacterial flagella. Assembly into flagella requires FliW. Acts as a homeostatic autoinhibitory regulator to control its own cytoplasmic levels. Partner switching by flagellin between FliW and CsrA provides a flagellar assembly checkpoint to tightly control the timing of flagellin synthesis. Flagellin binds to assembly factor FliW, freeing translation regulator CsrA to repress translation of the flagellin mRNA. When the flagellar hook is assembled flagellin is secreted, depleting intracellular flagellin, which frees FliW to interact with CsrA. This derepresses flagellin translation and provides protein for flagellar assembly. Once the flagellar filament is completed cytoplasmic flagellin levels rise and CsrA translation repression of flagellin reinitiates. The polypeptide is Flagellin (Bacillus subtilis (strain 168)).